The chain runs to 321 residues: Fructose-1,6-bisphosphatase class 1 (321 aa).

4 residues coordinate Mg(2+): Glu93, Asp114, Leu116, and Asp117. Substrate is bound by residues 117 to 120, Asn205, Tyr233, and Lys263; that span reads DGSS. Glu269 contributes to the Mg(2+) binding site.

This sequence belongs to the FBPase class 1 family. In terms of assembly, homotetramer. Requires Mg(2+) as cofactor.

The protein resides in the cytoplasm. The enzyme catalyses beta-D-fructose 1,6-bisphosphate + H2O = beta-D-fructose 6-phosphate + phosphate. The protein operates within carbohydrate biosynthesis; gluconeogenesis. The protein is Fructose-1,6-bisphosphatase class 1 of Persephonella marina (strain DSM 14350 / EX-H1).